An 803-amino-acid chain; its full sequence is Leucine--tRNA ligase (803 aa).

The 'HIGH' region motif lies at 40–51 (PYPSGQGLHVGH). A 'KMSKS' region motif is present at residues 575–579 (KMSKS). ATP is bound at residue Lys-578.

This sequence belongs to the class-I aminoacyl-tRNA synthetase family.

The protein resides in the cytoplasm. The enzyme catalyses tRNA(Leu) + L-leucine + ATP = L-leucyl-tRNA(Leu) + AMP + diphosphate. This Lacticaseibacillus paracasei (strain ATCC 334 / BCRC 17002 / CCUG 31169 / CIP 107868 / KCTC 3260 / NRRL B-441) (Lactobacillus paracasei) protein is Leucine--tRNA ligase.